Reading from the N-terminus, the 445-residue chain is 23S rRNA (uracil(1939)-C(5))-methyltransferase RlmD (445 aa).

One can recognise a TRAM domain in the interval 12 to 70; it reads SKQLSSKLSLNVTQLDHLGAGIAHHQGKIVFINGALPGETVQVQLTEQKKKFSRAKLLK. [4Fe-4S] cluster contacts are provided by cysteine 83, cysteine 89, cysteine 92, and cysteine 171. Residues glutamine 278, phenylalanine 307, asparagine 312, glutamate 328, aspartate 355, and aspartate 375 each coordinate S-adenosyl-L-methionine. Cysteine 401 acts as the Nucleophile in catalysis.

It belongs to the class I-like SAM-binding methyltransferase superfamily. RNA M5U methyltransferase family. RlmD subfamily.

The enzyme catalyses uridine(1939) in 23S rRNA + S-adenosyl-L-methionine = 5-methyluridine(1939) in 23S rRNA + S-adenosyl-L-homocysteine + H(+). Its function is as follows. Catalyzes the formation of 5-methyl-uridine at position 1939 (m5U1939) in 23S rRNA. The protein is 23S rRNA (uracil(1939)-C(5))-methyltransferase RlmD of Shewanella piezotolerans (strain WP3 / JCM 13877).